A 243-amino-acid polypeptide reads, in one-letter code: DNA repair protein RecO (243 aa).

This sequence belongs to the RecO family.

In terms of biological role, involved in DNA repair and RecF pathway recombination. The chain is DNA repair protein RecO from Vibrio parahaemolyticus serotype O3:K6 (strain RIMD 2210633).